A 291-amino-acid polypeptide reads, in one-letter code: tRNA U34 carboxymethyltransferase (291 aa).

Carboxy-S-adenosyl-L-methionine-binding positions include lysine 61, tryptophan 75, lysine 80, glycine 100, 122-124 (DPS), 149-150 (VE), tyrosine 169, and arginine 284.

The protein belongs to the class I-like SAM-binding methyltransferase superfamily. CmoB family. In terms of assembly, homotetramer.

It catalyses the reaction carboxy-S-adenosyl-L-methionine + 5-hydroxyuridine(34) in tRNA = 5-carboxymethoxyuridine(34) in tRNA + S-adenosyl-L-homocysteine + H(+). Its function is as follows. Catalyzes carboxymethyl transfer from carboxy-S-adenosyl-L-methionine (Cx-SAM) to 5-hydroxyuridine (ho5U) to form 5-carboxymethoxyuridine (cmo5U) at position 34 in tRNAs. The polypeptide is tRNA U34 carboxymethyltransferase (Campylobacter jejuni (strain RM1221)).